The following is a 142-amino-acid chain: uncharacterized protein (142 aa).

This is an uncharacterized protein from Pseudomonas putida (Arthrobacter siderocapsulatus).